A 234-amino-acid chain; its full sequence is Phosphoribosylaminoimidazole-succinocarboxamide synthase (234 aa).

Belongs to the SAICAR synthetase family.

It catalyses the reaction 5-amino-1-(5-phospho-D-ribosyl)imidazole-4-carboxylate + L-aspartate + ATP = (2S)-2-[5-amino-1-(5-phospho-beta-D-ribosyl)imidazole-4-carboxamido]succinate + ADP + phosphate + 2 H(+). It functions in the pathway purine metabolism; IMP biosynthesis via de novo pathway; 5-amino-1-(5-phospho-D-ribosyl)imidazole-4-carboxamide from 5-amino-1-(5-phospho-D-ribosyl)imidazole-4-carboxylate: step 1/2. The protein is Phosphoribosylaminoimidazole-succinocarboxamide synthase of Streptococcus uberis (strain ATCC BAA-854 / 0140J).